We begin with the raw amino-acid sequence, 91 residues long: Glycophorin-B (91 aa).

The first 19 residues, 1 to 19 (MYGKIIFVLLLSEIVSISA), serve as a signal peptide directing secretion. Topologically, residues 20–59 (LSTTEVAMHTSTSSSVTKSYISSQTNGETGQLVHRFTVPA) are extracellular. O-linked (GalNAc...) threonine glycosylation occurs at Thr-36. Ser-38 carries O-linked (GalNAc...) serine glycosylation. Residues 60 to 81 (PVVIILIILCVMAGIIGTILLI) form a helical membrane-spanning segment. The Cytoplasmic portion of the chain corresponds to 82 to 91 (SYSIRRLIKA).

Belongs to the glycophorin-A family. As to quaternary structure, component of the ankyrin-1 complex in the erythrocyte, composed of ANK1, RHCE, RHAG, SLC4A1, EPB42, GYPA, GYPB and AQP1. Interacts (via the N-terminal) with RHAG; this interaction bridges the (RHAG)2(RHCE) heterotrimer with the SLC4A1 Band 3 I dimer complexed with GYPA. In terms of processing, the N-terminal extracellular domain is heavily glycosylated on serine and threonine residues.

Its subcellular location is the cell membrane. Component of the ankyrin-1 complex, a multiprotein complex involved in the stability and shape of the erythrocyte membrane. This Homo sapiens (Human) protein is Glycophorin-B.